Reading from the N-terminus, the 406-residue chain is MADGNEDARAEDLPGPAFENYEAMELACPAERSGHVAVSDGRHMFVWGGYKSNQVRGLYDFYLPREELWIYNMETGRWKKINTEGDVPPSMSGSCAVCVDRVLYLFGGHHSRGNTNKFYMLDSRSADRGLQWERIDCQGIPPSSKDKLGVWVYKNKLIFFGGYGYLPEDKVLGTFEFDETSFWNSSHPRGWNDHVHILDTETFAWSQPITTGKAPSPRAAHACATVGNKGFVFGGRYRDARMNDLHYLNLDTWEWNELIPQGVCPVGRSWHSLTPVSSDHLFLFGGFTTEKQPLSDAWTYCISKNEWIQFNHPYVEKPRLWHTACASDEGEVIVFGGCANNLLVHHRAAHSNEVLIFSVQPKSLVRLSLEAVICFKEMLANSWSCLPKHLLHSVNQRFGSNNTSGS.

6 Kelch repeats span residues 31–85, 92–136, 148–207, 221–259, 271–311, and 322–359; these read ERSG…NTEG, SGSC…ERID, LGVW…AWSQ, HACA…NELI, HSLT…IQFN, and HTAC…IFSV.

In terms of assembly, component of a CRL2(KLHDC2) E3 ubiquitin-protein ligase complex, also named ECS(KLHDC2) complex, composed of CUL2, Elongin BC (ELOB and ELOC), RBX1 and substrate-specific adapter KLHDC2. May form oligomers as a KLHDC2-ELOB-ELOC complex; this interaction is autoinhibitory for the E3 ligase complex as the substrate-binding site of KLHDC2 is blocked in the oligomer. Interacts with CREB3; interaction is direct and specific as it does not interact with CREB1, ATF4, ATF6, JUN, FOS, CEBPA or herpes simplex virus transactivator VP16. Autoubiquitinated by the CRL2(KLHDC2) E3 ligase complex.

The protein resides in the nucleus. Its pathway is protein modification; protein ubiquitination. Substrate-recognition component of a Cul2-RING (CRL2) E3 ubiquitin-protein ligase complex of the DesCEND (destruction via C-end degrons) pathway, which recognizes a C-degron located at the extreme C terminus of target proteins, leading to their ubiquitination and degradation. The C-degron recognized by the DesCEND pathway is usually a motif of less than ten residues and can be present in full-length proteins, truncated proteins or proteolytically cleaved forms. The CRL2(KLHDC2) complex specifically recognizes proteins with a diglycine (Gly-Gly) at the C-terminus, leading to their ubiquitination and degradation. The CRL2(KLHDC2) complex mediates ubiquitination and degradation of truncated SELENOK and SELENOS selenoproteins produced by failed UGA/Sec decoding, which end with a diglycine. The CRL2(KLHDC2) complex also recognizes proteolytically cleaved proteins ending with Gly-Gly, such as the N-terminal fragment of USP1, leading to their degradation. May also act as an indirect repressor of CREB3-mediated transcription by interfering with CREB3-DNA-binding. The chain is Kelch domain-containing protein 2 from Mus musculus (Mouse).